A 255-amino-acid chain; its full sequence is Small ribosomal subunit protein uS2 (255 aa).

It belongs to the universal ribosomal protein uS2 family.

This is Small ribosomal subunit protein uS2 (rpsB) from Streptococcus pyogenes serotype M1.